We begin with the raw amino-acid sequence, 267 residues long: Probable 3-methyl-2-oxobutanoate hydroxymethyltransferase (267 aa).

This sequence belongs to the PanB family.

The enzyme catalyses 3-methyl-2-oxobutanoate + (6R)-5,10-methylene-5,6,7,8-tetrahydrofolate + H2O = 2-dehydropantoate + (6S)-5,6,7,8-tetrahydrofolate. Its pathway is cofactor biosynthesis; (R)-pantothenate biosynthesis; (R)-pantoate from 3-methyl-2-oxobutanoate: step 1/2. This is Probable 3-methyl-2-oxobutanoate hydroxymethyltransferase from Schizosaccharomyces pombe (strain 972 / ATCC 24843) (Fission yeast).